Reading from the N-terminus, the 227-residue chain is dTTP/UTP pyrophosphatase (227 aa).

The disordered stretch occupies residues 1 to 21 (MNDLPRAELPGSGSPNPESLI). Asp87 (proton acceptor) is an active-site residue.

This sequence belongs to the Maf family. YhdE subfamily. Requires a divalent metal cation as cofactor.

Its subcellular location is the cytoplasm. The enzyme catalyses dTTP + H2O = dTMP + diphosphate + H(+). The catalysed reaction is UTP + H2O = UMP + diphosphate + H(+). In terms of biological role, nucleoside triphosphate pyrophosphatase that hydrolyzes dTTP and UTP. May have a dual role in cell division arrest and in preventing the incorporation of modified nucleotides into cellular nucleic acids. The polypeptide is dTTP/UTP pyrophosphatase (Rhodopirellula baltica (strain DSM 10527 / NCIMB 13988 / SH1)).